A 467-amino-acid polypeptide reads, in one-letter code: UDP-N-acetylmuramate--L-alanine ligase (467 aa).

114–120 (GTHGKTT) is an ATP binding site.

This sequence belongs to the MurCDEF family.

The protein resides in the cytoplasm. The catalysed reaction is UDP-N-acetyl-alpha-D-muramate + L-alanine + ATP = UDP-N-acetyl-alpha-D-muramoyl-L-alanine + ADP + phosphate + H(+). It participates in cell wall biogenesis; peptidoglycan biosynthesis. Functionally, cell wall formation. This Rhodopseudomonas palustris (strain BisB18) protein is UDP-N-acetylmuramate--L-alanine ligase.